The sequence spans 94 residues: Co-chaperonin GroES (94 aa).

This sequence belongs to the GroES chaperonin family. As to quaternary structure, heptamer of 7 subunits arranged in a ring. Interacts with the chaperonin GroEL.

It is found in the cytoplasm. In terms of biological role, together with the chaperonin GroEL, plays an essential role in assisting protein folding. The GroEL-GroES system forms a nano-cage that allows encapsulation of the non-native substrate proteins and provides a physical environment optimized to promote and accelerate protein folding. GroES binds to the apical surface of the GroEL ring, thereby capping the opening of the GroEL channel. This chain is Co-chaperonin GroES, found in Staphylococcus carnosus (strain TM300).